The following is an 86-amino-acid chain: Insulin-related peptide 2 (86 aa).

The first 19 residues, 1–19 (MKFYIVFALILACAACVSS), serve as a signal peptide directing secretion. A propeptide spanning residues 20–43 (QEGTNFYCGRQLSRTLALVCWGAE) is cleaved from the precursor. Arginine amide is present on Arg-63. Positions 67–86 (GPVDECCLKPCSIEEMLTYC) are excised as a propeptide.

Belongs to the insulin family. In terms of tissue distribution, DAGWWVPPQSARALGGGR-amide: Expressed in corpora cardiaca (CC), corpora allata (CA), antennal lobe (AL) and gnathal ganglion (GNG) (at protein level). Expression in CC and CA detected in most animals, in AL in some animals and in GNG in few animals (at protein level).

The protein localises to the secreted. The polypeptide is Insulin-related peptide 2 (Agrotis ipsilon (Black cutworm moth)).